The following is a 954-amino-acid chain: Zinc finger protein 618 (954 aa).

Position 1 is an N-acetylmethionine (Met-1). Positions 1–19 (MNQPGGAAAPQADGASAAG) are enriched in low complexity. The tract at residues 1–56 (MNQPGGAAAPQADGASAAGRKSTASRERLKRSQKSTKVEGPEPVPAEASLSAEQGT) is disordered. Glycyl lysine isopeptide (Lys-Gly) (interchain with G-Cter in SUMO2) cross-links involve residues Lys-63 and Lys-81. 2 consecutive C2H2-type zinc fingers follow at residues 147–169 (YECG…VRAH) and 188–210 (YTCD…RDLH). Residue Lys-239 forms a Glycyl lysine isopeptide (Lys-Gly) (interchain with G-Cter in SUMO2) linkage. A C2H2-type 3 zinc finger spans residues 256–278 (YTCEFCGKQYKYYTPYQEHVALH). Disordered stretches follow at residues 282 to 307 (STAP…VSPS) and 337 to 390 (RTPP…NSSE). The segment covering 340-357 (PATQTQTFRTPNSGSPAS) has biased composition (polar residues). Basic and acidic residues predominate over residues 366–380 (FSRRVEGKAQNHFEE). The C2H2-type 4 zinc-finger motif lies at 392–414 (YTCGACGIQFQFYNNLLEHMQSH). Residues 421 to 463 (NIASNQSRSPPAVVEEKWKPQAQRNSANNTTTSGLTPNSMIPE) form a disordered region. Residue Lys-437 forms a Glycyl lysine isopeptide (Lys-Gly) (interchain with G-Cter in SUMO2) linkage. The segment covering 442 to 459 (AQRNSANNTTTSGLTPNS) has biased composition (polar residues).

It belongs to the krueppel C2H2-type zinc-finger protein family. As to quaternary structure, interacts with UHRF2.

It is found in the nucleus. It localises to the chromosome. In terms of biological role, regulates UHRF2 function as a specific 5-hydroxymethylcytosine (5hmC) reader by regulating its chromatin localization. This is Zinc finger protein 618 (ZNF618) from Homo sapiens (Human).